The chain runs to 589 residues: ATP-dependent lipid A-core flippase (589 aa).

5 helical membrane-spanning segments follow: residues tryptophan 29 to leucine 49, alanine 68 to isoleucine 88, valine 157 to leucine 177, isoleucine 254 to alanine 274, and leucine 283 to lysine 303. The region spanning valine 32 to serine 314 is the ABC transmembrane type-1 domain. One can recognise an ABC transporter domain in the interval isoleucine 346–methionine 582. ATP is bound at residue glycine 380–serine 387.

Belongs to the ABC transporter superfamily. Lipid exporter (TC 3.A.1.106) family. As to quaternary structure, homodimer.

It is found in the cell inner membrane. The catalysed reaction is ATP + H2O + lipid A-core oligosaccharideSide 1 = ADP + phosphate + lipid A-core oligosaccharideSide 2.. Its function is as follows. Involved in lipopolysaccharide (LPS) biosynthesis. Translocates lipid A-core from the inner to the outer leaflet of the inner membrane. Transmembrane domains (TMD) form a pore in the inner membrane and the ATP-binding domain (NBD) is responsible for energy generation. The chain is ATP-dependent lipid A-core flippase from Xylella fastidiosa (strain Temecula1 / ATCC 700964).